Consider the following 351-residue polypeptide: Phospho-N-acetylmuramoyl-pentapeptide-transferase (351 aa).

10 consecutive transmembrane segments (helical) span residues 22 to 42 (ILAFFLSFFITIFIMPKFISW), 65 to 85 (TPTMGGLIYITSAVISILITT), 87 to 107 (FNKYVLLTLLLLVYFTYLGFI), 128 to 148 (FLLQWVGALVISYLLIKVGFD), 158 to 178 (YPIFDMGYYAVIFWAFIIVAM), 190 to 210 (GLATVPSIFSLFTLGILLYIV), 225 to 245 (LGVGELTIIVFALIGALLGFL), 254 to 274 (VFMGDSGSLPLGAVIGFLAIV), 279 to 299 (LLLIFIAFVFIMETVSVILQV), and 328 to 348 (KITIRFWIMALITNLIAILSI).

Belongs to the glycosyltransferase 4 family. MraY subfamily. Requires Mg(2+) as cofactor.

The protein resides in the cell inner membrane. The catalysed reaction is UDP-N-acetyl-alpha-D-muramoyl-L-alanyl-gamma-D-glutamyl-meso-2,6-diaminopimeloyl-D-alanyl-D-alanine + di-trans,octa-cis-undecaprenyl phosphate = di-trans,octa-cis-undecaprenyl diphospho-N-acetyl-alpha-D-muramoyl-L-alanyl-D-glutamyl-meso-2,6-diaminopimeloyl-D-alanyl-D-alanine + UMP. The protein operates within cell wall biogenesis; peptidoglycan biosynthesis. Functionally, catalyzes the initial step of the lipid cycle reactions in the biosynthesis of the cell wall peptidoglycan: transfers peptidoglycan precursor phospho-MurNAc-pentapeptide from UDP-MurNAc-pentapeptide onto the lipid carrier undecaprenyl phosphate, yielding undecaprenyl-pyrophosphoryl-MurNAc-pentapeptide, known as lipid I. In Nautilia profundicola (strain ATCC BAA-1463 / DSM 18972 / AmH), this protein is Phospho-N-acetylmuramoyl-pentapeptide-transferase.